A 252-amino-acid polypeptide reads, in one-letter code: Chitooligosaccharide deacetylase (252 aa).

Residues His61 and His125 each contribute to the Mg(2+) site.

Belongs to the YdjC deacetylase family. ChbG subfamily. As to quaternary structure, homodimer. Requires Mg(2+) as cofactor.

The protein resides in the cytoplasm. The enzyme catalyses N,N'-diacetylchitobiose + H2O = N-acetyl-beta-D-glucosaminyl-(1-&gt;4)-D-glucosamine + acetate. The catalysed reaction is diacetylchitobiose-6'-phosphate + H2O = N'-monoacetylchitobiose-6'-phosphate + acetate. It participates in glycan degradation; chitin degradation. Involved in the degradation of chitin. ChbG is essential for growth on the acetylated chitooligosaccharides chitobiose and chitotriose but is dispensable for growth on cellobiose and chitosan dimer, the deacetylated form of chitobiose. Deacetylation of chitobiose-6-P and chitotriose-6-P is necessary for both the activation of the chb promoter by the regulatory protein ChbR and the hydrolysis of phosphorylated beta-glucosides by the phospho-beta-glucosidase ChbF. Catalyzes the removal of only one acetyl group from chitobiose-6-P to yield monoacetylchitobiose-6-P, the inducer of ChbR and the substrate of ChbF. This is Chitooligosaccharide deacetylase from Salmonella paratyphi C (strain RKS4594).